A 485-amino-acid polypeptide reads, in one-letter code: Cytochrome P450 monooxygenase tndB (485 aa).

A helical membrane pass occupies residues 20–40 (VYGISAVIAVGLAIYSASLAI). Position 481 (Cys-481) interacts with heme.

The protein belongs to the cytochrome P450 family. Heme is required as a cofactor.

The protein resides in the membrane. It functions in the pathway secondary metabolite biosynthesis; terpenoid biosynthesis. Cytochrome P450 monooxygenase; part of the gene cluster that mediates the biosynthesis of talaronoid C, a fusicoccane diterpenoid with an unprecedented tricyclic 5/8/6 ring system. The first step in the pathway is performed by the fusicoccadiene synthase tndC that possesses both prenyl transferase and terpene cyclase activity, converting isopentenyl diphosphate and dimethylallyl diphosphate into geranylgeranyl diphosphate (GGDP) and further converting GGDP into talarodiene, a precursor for talaronoid C. The remaining enzymes from the cluster include the cytochrome P450 monooxygenase tndB, the aldehyde reductase tndE and the alcohol dehydrogenase tndF that are involved in the conversion of talarodiene into talaronoid C. The protein is Cytochrome P450 monooxygenase tndB of Aspergillus flavipes.